We begin with the raw amino-acid sequence, 107 residues long: Translation initiation factor IF-1, chloroplastic (107 aa).

Positions Arg-8–Pro-83 constitute an S1-like domain.

The protein belongs to the IF-1 family. In terms of assembly, component of the 30S ribosomal translation pre-initiation complex which assembles on the 30S ribosome in the order IF-2 and IF-3, IF-1 and N-formylmethionyl-tRNA(fMet); mRNA recruitment can occur at any time during PIC assembly.

The protein resides in the plastid. It localises to the chloroplast. One of the essential components for the initiation of protein synthesis. Stabilizes the binding of IF-2 and IF-3 on the 30S subunit to which N-formylmethionyl-tRNA(fMet) subsequently binds. Helps modulate mRNA selection, yielding the 30S pre-initiation complex (PIC). Upon addition of the 50S ribosomal subunit IF-1, IF-2 and IF-3 are released leaving the mature 70S translation initiation complex. The polypeptide is Translation initiation factor IF-1, chloroplastic (Lolium perenne (Perennial ryegrass)).